Here is a 711-residue protein sequence, read N- to C-terminus: Ferric/cupric reductase transmembrane component 2 (711 aa).

The first 23 residues, 1 to 23 (MHWTSILSAILLFCLSGARASPA), serve as a signal peptide directing secretion. Residues 24–164 (KTVIRNKVPL…GFYANLDVGN (141 aa)) lie on the Extracellular side of the membrane. 4 N-linked (GlcNAc...) asparagine glycosylation sites follow: Asn-85, Asn-108, Asn-120, and Asn-134. A helical membrane pass occupies residues 165–185 (IYGGIICAYFVAIMAFAGVLH). The Cytoplasmic portion of the chain corresponds to 186–235 (CMNYTPFKTVLLKQKLVGYVRGYLTLPTIGSKHASDFSYFRIFTGYLPTR). The helical transmembrane segment at 236-256 (LEGIIILGYLVLHTVFLAYGY) threads the bilayer. At 257–280 (EYDPENIIFKSRRVQVARYVADRS) the chain is on the extracellular side. In terms of domain architecture, Ferric oxidoreductase spans 280–414 (SGVLAFAHFP…SGIEWIYTAI (135 aa)). The chain crosses the membrane as a helical span at residues 281-301 (GVLAFAHFPLIVLFAGRNNFL). Residues 302–317 (EYISGVKYTSFIMFHK) lie on the Cytoplasmic side of the membrane. Positions 316 and 330 each coordinate heme. A helical transmembrane segment spans residues 318 to 340 (WLGRMMFLDAMIHGSAYTSYTVA). The N-linked (GlcNAc...) asparagine glycan is linked to Asn-341. The Extracellular segment spans residues 341 to 353 (NKTWATSKNRLYW). A helical transmembrane segment spans residues 354-374 (QFGVAALCLAGTMVFFSFAVF). Residues 375-377 (RKY) are Cytoplasmic-facing. A helical membrane pass occupies residues 378–398 (FYEAFLFLHIVLGAMFFYACW). His-386 and His-400 together coordinate heme. Topologically, residues 399–400 (EH) are extracellular. The helical transmembrane segment at 401 to 423 (VVSLSGIEWIYTAIAIWIVDRII) threads the bilayer. Residues 415–534 (AIWIVDRIIR…EGPYGSSSPV (120 aa)) form the FAD-binding FR-type domain. The Cytoplasmic portion of the chain corresponds to 424–711 (RIIKASYFGF…IEYFEEYQCW (288 aa)). An FAD-binding site is contributed by 479–485 (HPFTVLD). NADP(+)-binding positions include 526-529 (GPYG) and 677-678 (CG).

The protein belongs to the ferric reductase (FRE) family. Requires FAD as cofactor. It depends on heme as a cofactor.

It is found in the cell membrane. The catalysed reaction is 2 a Fe(II)-siderophore + NADP(+) + H(+) = 2 a Fe(III)-siderophore + NADPH. Its function is as follows. Metalloreductase responsible for reducing extracellular iron and copper prior to import. Catalyzes the reductive uptake of Fe(3+)-salts and Fe(3+) bound to catecholate or hydroxamate siderophores. Fe(3+) is reduced to Fe(2+), which then dissociates from the siderophore and can be imported by the high-affinity Fe(2+) transport complex in the plasma membrane. Also participates in Cu(2+) reduction and Cu(+) uptake. The polypeptide is Ferric/cupric reductase transmembrane component 2 (FRE2) (Saccharomyces cerevisiae (strain ATCC 204508 / S288c) (Baker's yeast)).